A 335-amino-acid chain; its full sequence is MKFVDSAKISVKAGDGGRGCVSFRREKFVPKGGPDGGDGGRGGHVYLRANRQLSTLLDFKYRKSYIAGRGEHGMGARKSGKNGNDVVIGVPCGTVVRNAETGEVLCDMVEDGQEIMIAKGGRGGQGNQHFATATRQAPRFAQPGEKGDEIELEMELKLMADVGLVGFPNAGKSTLISVFSAARPKIADYPFTTLVPNLGIVRYDDYKSFVMADIPGIIEGAAEGRGLGIQFLRHIQRTKTLLVMVPSDSADIAAEYATLLRELEKFDASLLSKPRLAVITKMDIAPEDFAIPELEPGIKVIAISSVAGQGLKALKDELWRQISTSTQITVDDAGN.

In terms of domain architecture, Obg spans 1 to 159 (MKFVDSAKIS…IELEMELKLM (159 aa)). In terms of domain architecture, OBG-type G spans 160–323 (ADVGLVGFPN…LKDELWRQIS (164 aa)). Residues 166–173 (GFPNAGKS), 191–195 (FTTLV), 213–216 (DIPG), 280–283 (TKMD), and 304–306 (SSV) contribute to the GTP site. Mg(2+) is bound by residues Ser173 and Thr193.

It belongs to the TRAFAC class OBG-HflX-like GTPase superfamily. OBG GTPase family. As to quaternary structure, monomer. Mg(2+) serves as cofactor.

Its subcellular location is the cytoplasm. Functionally, an essential GTPase which binds GTP, GDP and possibly (p)ppGpp with moderate affinity, with high nucleotide exchange rates and a fairly low GTP hydrolysis rate. Plays a role in control of the cell cycle, stress response, ribosome biogenesis and in those bacteria that undergo differentiation, in morphogenesis control. This Chlorobaculum parvum (strain DSM 263 / NCIMB 8327) (Chlorobium vibrioforme subsp. thiosulfatophilum) protein is GTPase Obg.